Here is a 95-residue protein sequence, read N- to C-terminus: Large ribosomal subunit protein uL23 (95 aa).

This sequence belongs to the universal ribosomal protein uL23 family. As to quaternary structure, part of the 50S ribosomal subunit. Contacts protein L29, and trigger factor when it is bound to the ribosome.

One of the early assembly proteins it binds 23S rRNA. One of the proteins that surrounds the polypeptide exit tunnel on the outside of the ribosome. Forms the main docking site for trigger factor binding to the ribosome. The chain is Large ribosomal subunit protein uL23 from Desulfatibacillum aliphaticivorans.